A 61-amino-acid polypeptide reads, in one-letter code: Putative neurotoxin-D (61 aa).

Positions 1–19 are cleaved as a signal peptide; it reads MRTTVAILLVLFALSAILA. Disulfide bonds link cysteine 31-cysteine 51, cysteine 37-cysteine 56, and cysteine 39-cysteine 58.

In terms of tissue distribution, expressed by the venom gland.

It is found in the secreted. The sequence is that of Putative neurotoxin-D from Lychas mucronatus (Chinese swimming scorpion).